The primary structure comprises 419 residues: Carboxypeptidase A1 (419 aa).

Positions 1-16 are cleaved as a signal peptide; it reads MKRLLVLSVLLAAVFG. Residues 17 to 110 constitute a propeptide, activation peptide; sequence NENFVGHQVL…KQQMSAFQAR (94 aa). One can recognise a Peptidase M14 domain in the interval 121-414; that stretch reads TYHTLDEIYE…LALLTIMDHT (294 aa). Residues His-179 and Glu-182 each coordinate Zn(2+). Substrate contacts are provided by residues 179–182, Arg-237, and 254–255; these read HSRE and NR. Residues Cys-248 and Cys-271 are joined by a disulfide bond. His-306 contributes to the Zn(2+) binding site. Substrate contacts are provided by residues 307–308 and Tyr-358; that span reads SY. Glu-380 (proton donor/acceptor) is an active-site residue.

This sequence belongs to the peptidase M14 family. In terms of assembly, monomer. It depends on Zn(2+) as a cofactor.

The protein localises to the secreted. It carries out the reaction Release of a C-terminal amino acid, but little or no action with -Asp, -Glu, -Arg, -Lys or -Pro.. Functionally, carboxypeptidase that catalyzes the release of a C-terminal amino acid, but has little or no action with -Asp, -Glu, -Arg, -Lys or -Pro. The sequence is that of Carboxypeptidase A1 (Cpa1) from Mus musculus (Mouse).